Consider the following 43-residue polypeptide: Defensin-B (43 aa).

Disulfide bonds link Cys-3/Cys-34, Cys-20/Cys-39, and Cys-24/Cys-41.

It localises to the secreted. In terms of biological role, antibacterial protein. Strong activity against the Gram-positive bacteria M.luteus, B.megaterium and S.aureus. Reduced activity against Gram-positive bacterium B.subtilis and weak activity against Gram-negative bacterium X.japonicus. No detectable activity against the Gram-negative bacteria E.asbriae, E.coli, P.aeruginosa and S.marcescens. The sequence is that of Defensin-B from Anomala cuprea (Cupreous chafer beetle).